The chain runs to 1828 residues: Proteasome activator complex subunit 4 (1828 aa).

HEAT repeat units follow at residues 462–506 (PEGP…LVDC), 985–1024 (NFCC…NHGG), 1164–1202 (YVLP…QLKR), 1339–1377 (DAFL…GSKH), 1621–1659 (PVQV…YNLF), and 1665–1703 (EESV…CNFL). The segment at 1635-1723 (ARSSSWHARY…EALCKTRLPK (89 aa)) is bromodomain-like (BRDL).

This sequence belongs to the BLM10 family. As to quaternary structure, homodimer. Interacts with the 20S and 26S proteasomes.

The protein resides in the cytoplasm. The protein localises to the cytosol. It is found in the nucleus. It localises to the nucleus speckle. Functionally, associated component of the proteasome that specifically recognizes acetylated histones and promotes ATP- and ubiquitin-independent degradation of core histones during DNA damage response. Recognizes and binds acetylated histones via its bromodomain-like (BRDL) region and activates the proteasome by opening the gated channel for substrate entry. Binds to the core proteasome via its C-terminus, which occupies the same binding sites as the proteasomal ATPases, opening the closed structure of the proteasome via an active gating mechanism. involved in DNA damage response in somatic cells: binds to acetylated histones and promotes degradation of histones. The polypeptide is Proteasome activator complex subunit 4 (psme4) (Xenopus laevis (African clawed frog)).